Reading from the N-terminus, the 246-residue chain is DNA repair protein RecO (246 aa).

Belongs to the RecO family.

In terms of biological role, involved in DNA repair and RecF pathway recombination. This Alkaliphilus metalliredigens (strain QYMF) protein is DNA repair protein RecO.